Here is a 1679-residue protein sequence, read N- to C-terminus: Lysophospholipase NTE1 (1679 aa).

Over residues 1–20 the composition is skewed to low complexity; sequence MRSMNCTTNNTNNTGQNTKN. The segment at 1 to 21 is disordered; that stretch reads MRSMNCTTNNTNNTGQNTKNS. Residues 1 to 49 lie on the Cytoplasmic side of the membrane; that stretch reads MRSMNCTTNNTNNTGQNTKNSLGSSFNSSNYTSYRFQTCLTDQIISEAQ. Residues 50-70 traverse the membrane as a helical segment; sequence TWSLSSLFNFSWVVSYFVMGA. At 71 to 103 the chain is on the lumenal side; sequence SRMIFRYGWYLATLSLLRIPKWIFFKLHHVQFT. A helical membrane pass occupies residues 104–124; sequence LSFWLILFALAVIVFVTYTIM. At 125 to 1679 the chain is on the cytoplasmic side; sequence KERILSQYKR…EFLLHRRNSI (1555 aa). Over residues 261–274 the composition is skewed to basic and acidic residues; sequence SDKDHGDETDHSDT. Residues 261–304 form a disordered region; sequence SDKDHGDETDHSDTDGLDDQDRDEEDEEEDDDIDNYDTKSCSSN. Over residues 275 to 295 the composition is skewed to acidic residues; it reads DGLDDQDRDEEDEEEDDDIDN. Phosphoserine occurs at positions 300 and 312. 2 disordered regions span residues 498–527 and 586–672; these read SSGS…KPSD and DILS…VSPR. Polar residues-rich tracts occupy residues 592–606 and 630–652; these read PIHN…GINT and FSSL…LDNT. S632, S634, S653, S661, S670, S680, and S739 each carry phosphoserine. The segment at 775 to 800 is disordered; it reads KEYTISNKRHNKSKSQDKKKPRAYKE. The segment covering 788–800 has biased composition (basic and acidic residues); it reads KSQDKKKPRAYKE. T803 is modified (phosphothreonine). Residues 803–947 and 943–1074 contribute to the a nucleoside 3',5'-cyclic phosphate site; these read TPNL…LTKL and SLTK…VAKK. Residues 855–882 are disordered; the sequence is SSSVVSSMSKPEQVSAQSSHKGENPHHT. A compositionally biased stretch (polar residues) spans 862-873; that stretch reads MSKPEQVSAQSS. A PNPLA domain is found at 1373–1537; the sequence is LVLGGGGARG…VDNLPVTEMR (165 aa). A GXGXXG motif is present at residues 1377–1382; it reads GGGARG. A GXSXG motif is present at residues 1404–1408; the sequence is GTSIG. S1406 (nucleophile) is an active-site residue. The active-site Proton acceptor is the D1524. Residues 1524–1526 carry the DGA/G motif; the sequence is DGG.

It belongs to the NTE family.

The protein resides in the endoplasmic reticulum membrane. The protein localises to the lipid droplet. It catalyses the reaction a 1-acyl-sn-glycero-3-phosphocholine + H2O = sn-glycerol 3-phosphocholine + a fatty acid + H(+). It carries out the reaction a 1,2-diacyl-sn-glycero-3-phosphocholine + 2 H2O = sn-glycerol 3-phosphocholine + 2 a carboxylate + 2 H(+). Positively regulated by SEC14. Inhibited by organophosphorus esters in the order phenyl saligenin phosphate (PSP) &gt; phenyldipentyl phosphinate (PDPP) = diisopropyl fluorophosphate (DFP) &gt; and paraoxon (PXN). Intracellular phospholipase B that catalyzes the double deacylation of phosphatidylcholine (PC) to glycerophosphocholine (GroPCho). Plays an important role in membrane lipid homeostasis. Responsible for the rapid PC turnover in response to inositol, elevated temperatures, or when choline is present in the growth medium. NTE1 activity impacts the repressing transcriptional activity of OPI1, the main regulator of phospholipid synthesis gene transcription. This chain is Lysophospholipase NTE1 (NTE1), found in Saccharomyces cerevisiae (strain ATCC 204508 / S288c) (Baker's yeast).